The chain runs to 1582 residues: MIPNSSAGGQSWGHPLRNVDNDTARGDTSQAFNRPDIRSEGQQYTPALPRHPGQPAVIDLTSSANDAQEGQPPAKRLKLDITAESSANPASPTPATTGDSRVTPGIANSKPSALSWRGRPVWSFQAMISEVMSGAEATEEDAILAPQGKRPASPPPFPQPSWKGAPPEQFGSNATKASESDSSKKVQTTPFRVEVPSIAPALKGDKVADFAPWIGNHPEDILSEQTVKQGHYDRTQVSQNESNTARPSLYAQLKHRSGLQMLSSVFMAALEKRQNHNTINVPSNFKPPPRVTLTDNKREAWLRDLANPSVPLRRLSRTIPHGIRGKNLLDQCLSKWIPVNRAVWLVKCVGANEIRACKRKGTGGTLVVGSEVKWVRDWTSGVQQFLEGVIGACGSADWKSKMTYATSLTARLFFERLLDHDQYFAWFLTSLEGASLNMVPVWLLMLGIYWDSMLRYRKRGRRLAEVLLGKLHQTTELQRPTLLQPLAERLSCCIRKLVLEHTSSLILPNSWETHRDLILSCLNMKETADKTIFDSLAERNSRIQLPSSRSDSTRQSAHQRVIQLFDSIQSSQDIASTSVACLNALEDRQTLVIKLLEWSATSFRSGLHRVYTAARLLRKWKISGVDIDTYIISFLSTVQDLAQLDMDNVYHIISELVRSQTFSVSRYLQWLMAKGVARKSSGTSGEVLAADARLLTQLPMSRSPEHVRNLRLTLLARAGVSVDEESSTIKCLKSSISQRLPNIFEVEASNSKHINFSKHDLTWAVKSEVSMWIRQGVVKHLKDTTRISALTPGEFYCVREILERFGDCSILADVLKQAIECDDNIILASVSDTVNYHFDALSMIGATSDLFRGLVGSYARLKRSGNLSLDFVFSLIELGLRLPDESGTVYLLRQDLARIESKSALAAPSPLSDHIPTTFNEVDASFQERLEQLLSCGNGLDESTMGAIISSLTKILTDGGGAAKVSAKDACRYLAYLRPFNPKYLDGMLVRYVYGLLKSSSRPTMSQVLSPLIGVGCVTIHSFVLLVNKLSASAQTTGAIANPDSLRLDILELLLPQEESSADMVTYRFRLAQQEFLVKYPEETLNIISDAIPLFDADFHDANLGSRRPDLPACTVVLLRTLLAQNSSLVLKYCMQKLDGHSSFTTVLGKAVDILLGLDPEDEMEPSSQAERVILMNNDFSLPYCQLKLKLLFNAKAGNEVKNHIVDVMFKAAVTDSRSKRSHWVGLVSLMDQEAARQIRERAEGCFFSVAMFDESMDDTSLPSGASSLSSIESAKLYLNIIEKLAYSIPQAGVQSIPPLLVERLDLLLQKLIIMQINSNSVAASSSGSTIVSKINFERALAFWFSALLRLIVLHRAAFNVPPASGSKVDSLREQTRLLVSILCISLARLPENILRLFPAADYFPHTIQSHNFRPCPGILLQTHALDVAASLIDSFPDEARHQCVRFLRERCPPFLKFQNDRRFLYLLGPMTDTTIPSSQLSASISSPAAGGSTPTPIPSGTLSGGHSSQATQQMAALTGPFSGLSENTKLVADRLRIQNGGRINGPYPVRPWELLEDAAPILGVNDTAVSLKLFDARRVRA.

Disordered stretches follow at residues Met-1–Leu-114, Pro-146–Thr-189, and Ser-1479–Thr-1512. Residues Ala-83 to Ser-100 are compositionally biased toward polar residues. Low complexity predominate over residues Ser-1479–Ser-1493. Residues Pro-1499–Thr-1512 are compositionally biased toward polar residues.

Belongs to the Mediator complex subunit 12 family. Component of the srb8-11 complex, which itself associates with the Mediator complex.

The protein localises to the nucleus. In terms of biological role, component of the srb8-11 complex. The srb8-11 complex is a regulatory module of the Mediator complex which is itself involved in regulation of basal and activated RNA polymerase II-dependent transcription. The srb8-11 complex may be involved in the transcriptional repression of a subset of genes regulated by Mediator. It may inhibit the association of the Mediator complex with RNA polymerase II to form the holoenzyme complex. The polypeptide is Mediator of RNA polymerase II transcription subunit 12 (srb8) (Emericella nidulans (strain FGSC A4 / ATCC 38163 / CBS 112.46 / NRRL 194 / M139) (Aspergillus nidulans)).